Reading from the N-terminus, the 176-residue chain is ATP-dependent protease subunit HslV (176 aa).

The active site involves threonine 5. Glycine 161, cysteine 164, and threonine 167 together coordinate Na(+).

This sequence belongs to the peptidase T1B family. HslV subfamily. As to quaternary structure, a double ring-shaped homohexamer of HslV is capped on each side by a ring-shaped HslU homohexamer. The assembly of the HslU/HslV complex is dependent on binding of ATP.

Its subcellular location is the cytoplasm. It carries out the reaction ATP-dependent cleavage of peptide bonds with broad specificity.. With respect to regulation, allosterically activated by HslU binding. Functionally, protease subunit of a proteasome-like degradation complex believed to be a general protein degrading machinery. This is ATP-dependent protease subunit HslV from Sulfurovum sp. (strain NBC37-1).